The sequence spans 909 residues: Protein NLP1 (909 aa).

4 disordered regions span residues 51–71, 536–556, 568–605, and 690–745; these read KSLK…DNSP, KEDP…PVPN, ASTP…RAKT, and NSPN…ENTG. The segment covering 55–70 has biased composition (polar residues); it reads QTEQSPSASTAMNDNS. An RWP-RK domain is found at 595-676; sequence RRPGEKKRAK…MDSVQGAQGS (82 aa). The span at 690–716 shows a compositional bias: polar residues; that stretch reads NSPNMSSNGPSLKSNEQPSHLNAQTDN. Residues 725–745 are compositionally biased toward low complexity; that stretch reads RSPSSSCSKSSGSSNNNENTG. The PB1 domain maps to 811–894; that stretch reads AIKVKATFGE…HTIKISLNEA (84 aa).

The protein resides in the nucleus. Its function is as follows. Probable transcription factor. The protein is Protein NLP1 (NLP1) of Arabidopsis thaliana (Mouse-ear cress).